Here is a 523-residue protein sequence, read N- to C-terminus: Amino acid transporter protein 6 (523 aa).

The Cytoplasmic segment spans residues 1–19 (MLNVFGVSASMPDDSRSQK). A helical membrane pass occupies residues 20 to 40 (MGLLGAISYIVGNIVGSGIFI). The Extracellular portion of the chain corresponds to 41–51 (TPTSIIENVNS). The helical transmembrane segment at 52 to 72 (VGLSLAIWILAAFISMLGSFC) threads the bilayer. Residues 73 to 86 (YVELGTSIRLSGGD) are Cytoplasmic-facing. Residues 87–107 (FAYLCFMKWYPVAFAFMCIGC) traverse the membrane as a helical segment. Topologically, residues 108 to 145 (TINYPATLAVQAQTFAEYVFRGAGVELDETSEFWAKKL) are extracellular. Residues 146–166 (LGFSLIILLMFMNFFSLKTFV) form a helical membrane-spanning segment. Topologically, residues 167–173 (QRFSILA) are cytoplasmic. Residues 174-194 (SLAKIAATLLIIITGFYYLIF) traverse the membrane as a helical segment. Topologically, residues 195–214 (KHWKQNLEEPFKGSNWNPGP) are extracellular. A helical membrane pass occupies residues 215-235 (FVNALFAGLFSYDGWDILNFG). Over 236-249 (AEEIENPKRTMPLS) the chain is Cytoplasmic. The chain crosses the membrane as a helical span at residues 250 to 270 (IIIGMTCIGVIYVAVNVAYSI). Topologically, residues 271 to 290 (VLSPTEMIASNAVAIDFANK) are extracellular. A glycan (N-linked (GlcNAc...) asparagine) is linked at N289. The helical transmembrane segment at 291–311 (TLGAAAFVVPVMVAILLIGSL) threads the bilayer. Residues 312-348 (NSTMFSASRYLQAVSRQGHIPSAISGIAPNCDSPRVA) are Cytoplasmic-facing. A helical membrane pass occupies residues 349 to 369 (LLVHILIAIAVSFLGDPDKLI). The Extracellular segment spans residues 370–404 (NYVAFAQWSQRAFTMSALLYLRIRGRPRHPDRIQL). Residues 405-425 (PIIMPILFFLVCTSMVVISII) form a helical membrane-spanning segment. Over 426 to 429 (DDFK) the chain is Cytoplasmic. A helical membrane pass occupies residues 430-450 (SSAVGLGILLGGLIIFIIFVW). The Extracellular portion of the chain corresponds to 451–523 (DRALPSSHTF…GNGQFKCTRM (73 aa)). A glycan (N-linked (GlcNAc...) asparagine) is linked at N462. The short motif at 521 to 523 (TRM) is the PDZ-binding motif element.

It belongs to the amino acid-polyamine-organocation (APC) superfamily. In terms of assembly, interacts (via PDZ-binding motif) with nfrl-1 (via PDZ 2 domain); the interaction with nrfl-1 is required to sequester aat-6 to the apical cell membrane of intestinal cells. As to expression, expressed at the apical cell membrane of intestinal cells.

Its subcellular location is the apical cell membrane. Amino acid transporter that mediates the uptake of the L-enantiomers of various amino acids, including L-glutamate. May play a role in promoting fertility. This is Amino acid transporter protein 6 from Caenorhabditis elegans.